A 262-amino-acid chain; its full sequence is WW domain-binding protein 2 (262 aa).

Residues 1-84 (MALNKNHSEG…YLMKDCEVKQ (84 aa)) enclose the GRAM domain. At Y192 the chain carries Phosphotyrosine. Positions 196 to 200 (PPPPY) match the PPxY motif 1 motif. Residues 197–206 (PPPYPGPMEP) are compositionally biased toward pro residues. The interval 197 to 262 (PPPYPGPMEP…YYPPEDKKTQ (66 aa)) is disordered. The segment covering 219–231 (AAEAKAAEAAASA) has biased composition (low complexity). Y232 carries the phosphotyrosine modification. Positions 246 to 255 (SQPPPPPYYP) are enriched in pro residues. Positions 249–253 (PPPPY) match the PPxY motif 2 motif.

In terms of assembly, binds to the WW domain of YAP1, WWP1 and WWP2. Interacts with NEDD4. Interacts with ESR1 and UBE3A. Phosphorylated in repsonse to EGF as well as estrogen and progesterone hormones. Tyr-192 and Tyr-232 are phosphorylated by YES and SRC inducing nuclear translocation.

The protein resides in the cytoplasm. Its subcellular location is the nucleus. Its function is as follows. Acts as a transcriptional coactivator of estrogen and progesterone receptors (ESR1 and PGR) upon hormone activation. In presence of estrogen, binds to ESR1-responsive promoters. Synergizes with YAP1 to enhance PGR activity. Modulates expression of post-synaptic scaffolding proteins via regulation of ESR1, ESR2 and PGR. The polypeptide is WW domain-binding protein 2 (Wbp2) (Rattus norvegicus (Rat)).